The sequence spans 309 residues: Large ribosomal subunit protein uL22m (309 aa).

The N-terminal 25 residues, 1-25, are a transit peptide targeting the mitochondrion; it reads MNFHTARISQVGVISRALLSSVSRR. A disordered region spans residues 40 to 63; the sequence is SLFGSITENKPKEGKNRGDEDAGS. Over residues 48 to 59 the composition is skewed to basic and acidic residues; it reads NKPKEGKNRGDE.

It belongs to the universal ribosomal protein uL22 family. Component of the mitochondrial large ribosomal subunit (mt-LSU). Mature yeast 74S mitochondrial ribosomes consist of a small (37S) and a large (54S) subunit. The 37S small subunit contains a 15S ribosomal RNA (15S mt-rRNA) and 34 different proteins. The 54S large subunit contains a 21S rRNA (21S mt-rRNA) and 46 different proteins. uL22m forms the wall of the exit tunnel.

The protein resides in the mitochondrion. In terms of biological role, component of the mitochondrial ribosome (mitoribosome), a dedicated translation machinery responsible for the synthesis of mitochondrial genome-encoded proteins, including at least some of the essential transmembrane subunits of the mitochondrial respiratory chain. The mitoribosomes are attached to the mitochondrial inner membrane and translation products are cotranslationally integrated into the membrane. This Saccharomyces cerevisiae (strain ATCC 204508 / S288c) (Baker's yeast) protein is Large ribosomal subunit protein uL22m (MRPL22).